The chain runs to 359 residues: MDLLYAPSSTSAIEMSGQLRATLQQLETVAKFGRATASSISSVLFVSAGAGLAIARSLKRYTDQVGRNLRYEAYASATFVNLMRANPSMVNDPTTLVVLSSKSGMTPETVEAAAFLKDKACKSVVFTASANSKLASFGHQTFSTGITTQAFQAIHMLMLSLIGGILNERENWALLPALISSLQVLPAALFKAAEKGVQPGIAFAARFADDHPLYFIASGCAGIVPHAFGLCVLQERFGFEIHTVDGADFFHSFVETVRTAKRSHYILIIPDDASRPQMLDVKTFFDMRFKEGEISFQVIETTGFDMSGIDPQIGAIVGPMICEAFLKPWAPALAEATGKTMLDPLLHMGKFDYYNCHPA.

Positions Thr-28–Asn-171 constitute an SIS domain.

This Rhizobium rhizogenes (Agrobacterium rhizogenes) protein is Agropine synthesis conjugase (mas2).